The primary structure comprises 378 residues: Putative zinc finger protein C09F5.3 (378 aa).

The span at 1 to 14 (MRKTEKMKRPHNSS) shows a compositional bias: basic residues. Disordered stretches follow at residues 1–36 (MRKT…SKSI) and 61–80 (TLSE…NSAP). 2 stretches are compositionally biased toward basic and acidic residues: residues 16-26 (VKQEERADDSH) and 62-71 (LSEHVPEKKP). The segment at 42 to 65 (LKCELCSTVCSSISQLQSHTLSEH) adopts a C2H2-type 1 zinc-finger fold. Residues 85–107 (VACQQCEDTFEDFAQFAIHMKSH) form a C2H2-type 2; degenerate zinc finger. The C2H2-type 3; degenerate zinc-finger motif lies at 204 to 226 (YGCALCATSYPSQLHLITHVQMS). The interval 231 to 250 (TFYPPSLPIPTPPSPKSTPK) is disordered. Positions 235–246 (PSLPIPTPPSPK) are enriched in pro residues. 4 C2H2-type zinc fingers span residues 254–277 (LQCS…LRKH), 284–306 (DKCA…CLRH), 312–334 (HHCP…CAYH), and 355–377 (FVCP…TKIH).

It localises to the nucleus. The chain is Putative zinc finger protein C09F5.3 from Caenorhabditis elegans.